A 282-amino-acid polypeptide reads, in one-letter code: Parvulin-like PPIase (282 aa).

An N-terminal signal peptide occupies residues 1–20 (MKKLSVIFLSVSMLSGIAFA). One can recognise a PpiC domain in the interval 138 to 231 (KEQIKVAHIL…FGWHIIKVLE (94 aa)).

It belongs to the PpiC/parvulin rotamase family.

The protein localises to the cell outer membrane. It catalyses the reaction [protein]-peptidylproline (omega=180) = [protein]-peptidylproline (omega=0). The chain is Parvulin-like PPIase (plp) from Rickettsia conorii (strain ATCC VR-613 / Malish 7).